A 122-amino-acid polypeptide reads, in one-letter code: uncharacterized protein (122 aa).

A signal peptide spans 1-33; that stretch reads MASTVAGLSMSAESLRLPLLIGVSSGMLSVSDA.

This is an uncharacterized protein from Saccharomyces cerevisiae (strain ATCC 204508 / S288c) (Baker's yeast).